Reading from the N-terminus, the 482-residue chain is NADH-quinone oxidoreductase subunit N (482 aa).

Helical transmembrane passes span 10-30 (ALGP…LILY), 44-64 (VGAI…PLGA), 77-97 (GFAR…LLLA), 113-133 (ILIV…DLIG), 166-186 (FVLG…VYGF), 206-226 (LGLV…LAAV), 243-265 (VTAF…VFIG), 277-296 (IIVF…AIGQ), 302-322 (LMAY…AAGT), 328-348 (GVVV…AVIL), 374-394 (AFCL…AGFF), 397-417 (FYVF…IGVV), and 451-471 (IVLA…APLV).

The protein belongs to the complex I subunit 2 family. As to quaternary structure, NDH-1 is composed of 14 different subunits. Subunits NuoA, H, J, K, L, M, N constitute the membrane sector of the complex.

It is found in the cell inner membrane. The enzyme catalyses a quinone + NADH + 5 H(+)(in) = a quinol + NAD(+) + 4 H(+)(out). Its function is as follows. NDH-1 shuttles electrons from NADH, via FMN and iron-sulfur (Fe-S) centers, to quinones in the respiratory chain. The immediate electron acceptor for the enzyme in this species is believed to be ubiquinone. Couples the redox reaction to proton translocation (for every two electrons transferred, four hydrogen ions are translocated across the cytoplasmic membrane), and thus conserves the redox energy in a proton gradient. The protein is NADH-quinone oxidoreductase subunit N of Methylobacterium nodulans (strain LMG 21967 / CNCM I-2342 / ORS 2060).